The following is a 143-amino-acid chain: Actin-depolymerizing factor (143 aa).

One can recognise an ADF-H domain in the interval 11–143 (GMGVADHSKN…DLEVLRERAH (133 aa)).

Belongs to the actin-binding proteins ADF family.

Its function is as follows. Actin-depolymerizing protein. Severs actin filaments (F-actin) and binds to actin monomers. The protein is Actin-depolymerizing factor of Vitis vinifera (Grape).